Consider the following 300-residue polypeptide: Protoheme IX farnesyltransferase (300 aa).

9 consecutive transmembrane segments (helical) span residues 31–51, 52–72, 92–112, 123–145, 152–172, 179–199, 225–245, 247–267, and 280–300; these read VMSL…NSLH, PFIS…AGAI, IVRG…MAFF, FLSA…MWLK, IVIG…SVSG, VILF…LALF, ILIY…VGMS, IIYL…SISL, and FFAY…FCRV.

This sequence belongs to the UbiA prenyltransferase family. Protoheme IX farnesyltransferase subfamily.

It localises to the cell inner membrane. The catalysed reaction is heme b + (2E,6E)-farnesyl diphosphate + H2O = Fe(II)-heme o + diphosphate. Its pathway is porphyrin-containing compound metabolism; heme O biosynthesis; heme O from protoheme: step 1/1. In terms of biological role, converts heme B (protoheme IX) to heme O by substitution of the vinyl group on carbon 2 of heme B porphyrin ring with a hydroxyethyl farnesyl side group. This is Protoheme IX farnesyltransferase from Rickettsia bellii (strain OSU 85-389).